A 750-amino-acid polypeptide reads, in one-letter code: von Willebrand factor A domain-containing protein DDB_G0292188 (750 aa).

A VWFA domain is found at 17–249 (EIKTVFNSDS…IKDDLLLDVV (233 aa)). Low complexity-rich tracts occupy residues 586 to 595 (SINDNNNSFN) and 603 to 645 (PFFE…SSAS). The disordered stretch occupies residues 586–657 (SINDNNNSFN…PPPSQMLNEQ (72 aa)).

In Dictyostelium discoideum (Social amoeba), this protein is von Willebrand factor A domain-containing protein DDB_G0292188.